Reading from the N-terminus, the 515-residue chain is ATP synthase subunit alpha (515 aa).

Position 171–178 (171–178 (GDRQTGKT)) interacts with ATP.

This sequence belongs to the ATPase alpha/beta chains family. In terms of assembly, F-type ATPases have 2 components, CF(1) - the catalytic core - and CF(0) - the membrane proton channel. CF(1) has five subunits: alpha(3), beta(3), gamma(1), delta(1), epsilon(1). CF(0) has three main subunits: a(1), b(2) and c(9-12). The alpha and beta chains form an alternating ring which encloses part of the gamma chain. CF(1) is attached to CF(0) by a central stalk formed by the gamma and epsilon chains, while a peripheral stalk is formed by the delta and b chains.

The protein resides in the cell inner membrane. The catalysed reaction is ATP + H2O + 4 H(+)(in) = ADP + phosphate + 5 H(+)(out). In terms of biological role, produces ATP from ADP in the presence of a proton gradient across the membrane. The alpha chain is a regulatory subunit. In Xylella fastidiosa (strain 9a5c), this protein is ATP synthase subunit alpha.